Reading from the N-terminus, the 159-residue chain is Phosphopantetheine adenylyltransferase (159 aa).

T10 serves as a coordination point for substrate. Residues 10–11 (TF) and H18 each bind ATP. The substrate site is built by K42, M74, and R88. ATP is bound by residues 89 to 91 (GLR), E99, and 124 to 130 (WSFISSS).

Belongs to the bacterial CoaD family. As to quaternary structure, homohexamer. It depends on Mg(2+) as a cofactor.

Its subcellular location is the cytoplasm. It carries out the reaction (R)-4'-phosphopantetheine + ATP + H(+) = 3'-dephospho-CoA + diphosphate. Its pathway is cofactor biosynthesis; coenzyme A biosynthesis; CoA from (R)-pantothenate: step 4/5. Functionally, reversibly transfers an adenylyl group from ATP to 4'-phosphopantetheine, yielding dephospho-CoA (dPCoA) and pyrophosphate. In Klebsiella pneumoniae (strain 342), this protein is Phosphopantetheine adenylyltransferase.